Consider the following 240-residue polypeptide: Membrane-spanning 4-domains subfamily A member 7 (240 aa).

The Cytoplasmic portion of the chain corresponds to 1-47; sequence MLLQSQTMGVSHSFTPKGITIPQREKPGHMYQNEDYLQNGLPTETTV. The helical transmembrane segment at 48 to 68 threads the bilayer; that stretch reads LGTVQILCCLLISSLGAILVF. Residues 69 to 83 lie on the Extracellular side of the membrane; that stretch reads APYPSHFNPAISTTL. The chain crosses the membrane as a helical span at residues 84–104; sequence MSGYPFLGALCFGITGSLSII. The Cytoplasmic portion of the chain corresponds to 105 to 121; sequence SGKQSTKPFDLSSLTSN. Residues 122-142 form a helical membrane-spanning segment; the sequence is AVSSVTAGAGLFLLADSMVAL. Topologically, residues 143-178 are extracellular; sequence RTASQHCGSEMDYLSSLPYSEYYYPIYEIKDCLLTS. Residues 179–199 form a helical membrane-spanning segment; the sequence is VSLTGVLVVMLIFTVLELLLA. Over 200-240 the chain is Cytoplasmic; sequence AYSSVFWWKQLYSNNPGSSFSSTQSQDHIQQVKKSSSRSWI. Residues 218-240 are disordered; the sequence is SFSSTQSQDHIQQVKKSSSRSWI.

This sequence belongs to the MS4A family. Ubiquitous expression in normal tissues. Expression is more elevated in adult liver, lung, spleen, and heart than in their fetal counterparts, and is higher in normal tissues than in the cancerous tissue or cell lines. Low levels of expression were detected in the promonocytic stage, whereas high levels of expression were detected in mature monocytes.

The protein resides in the membrane. Its function is as follows. May be involved in signal transduction as a component of a multimeric receptor complex. The polypeptide is Membrane-spanning 4-domains subfamily A member 7 (MS4A7) (Homo sapiens (Human)).